The primary structure comprises 48 residues: Large ribosomal subunit protein bL33B (48 aa).

This sequence belongs to the bacterial ribosomal protein bL33 family.

The chain is Large ribosomal subunit protein bL33B (rpmG2) from Mycoplasma pneumoniae (strain ATCC 29342 / M129 / Subtype 1) (Mycoplasmoides pneumoniae).